Consider the following 433-residue polypeptide: Gamma-glutamyl phosphate reductase (433 aa).

The protein belongs to the gamma-glutamyl phosphate reductase family.

The protein localises to the cytoplasm. It catalyses the reaction L-glutamate 5-semialdehyde + phosphate + NADP(+) = L-glutamyl 5-phosphate + NADPH + H(+). It functions in the pathway amino-acid biosynthesis; L-proline biosynthesis; L-glutamate 5-semialdehyde from L-glutamate: step 2/2. Catalyzes the NADPH-dependent reduction of L-glutamate 5-phosphate into L-glutamate 5-semialdehyde and phosphate. The product spontaneously undergoes cyclization to form 1-pyrroline-5-carboxylate. In Psychrobacter cryohalolentis (strain ATCC BAA-1226 / DSM 17306 / VKM B-2378 / K5), this protein is Gamma-glutamyl phosphate reductase.